The chain runs to 253 residues: Triosephosphate isomerase (253 aa).

Substrate is bound at residue 8–10 (NWK). The Electrophile role is filled by His93. Glu165 (proton acceptor) is an active-site residue. Residues Gly171, Ser210, and 231-232 (GG) contribute to the substrate site.

This sequence belongs to the triosephosphate isomerase family. As to quaternary structure, homodimer.

It is found in the cytoplasm. The enzyme catalyses D-glyceraldehyde 3-phosphate = dihydroxyacetone phosphate. Its pathway is carbohydrate biosynthesis; gluconeogenesis. The protein operates within carbohydrate degradation; glycolysis; D-glyceraldehyde 3-phosphate from glycerone phosphate: step 1/1. Its function is as follows. Involved in the gluconeogenesis. Catalyzes stereospecifically the conversion of dihydroxyacetone phosphate (DHAP) to D-glyceraldehyde-3-phosphate (G3P). This chain is Triosephosphate isomerase, found in Francisella tularensis subsp. tularensis (strain FSC 198).